Consider the following 144-residue polypeptide: 3-hydroxyacyl-[acyl-carrier-protein] dehydratase FabZ (144 aa).

Residue His-51 is part of the active site.

This sequence belongs to the thioester dehydratase family. FabZ subfamily.

It localises to the cytoplasm. It catalyses the reaction a (3R)-hydroxyacyl-[ACP] = a (2E)-enoyl-[ACP] + H2O. Involved in unsaturated fatty acids biosynthesis. Catalyzes the dehydration of short chain beta-hydroxyacyl-ACPs and long chain saturated and unsaturated beta-hydroxyacyl-ACPs. This chain is 3-hydroxyacyl-[acyl-carrier-protein] dehydratase FabZ, found in Lactococcus lactis subsp. cremoris (strain MG1363).